Here is a 97-residue protein sequence, read N- to C-terminus: Acylphosphatase (97 aa).

In terms of domain architecture, Acylphosphatase-like spans 3–97 (KVKMIVSGRV…PDFTDFNIKY (95 aa)). Residues R18 and N36 contribute to the active site.

It belongs to the acylphosphatase family.

It catalyses the reaction an acyl phosphate + H2O = a carboxylate + phosphate + H(+). This Lactococcus lactis subsp. lactis (strain IL1403) (Streptococcus lactis) protein is Acylphosphatase (acyP).